Reading from the N-terminus, the 656-residue chain is MKVLCVAEKNSIAKAVSQILGGGRSTSRDSGYMYVKNYDFMFSGFPFARNGANCEVTMTSVAGHLTGIDFSHDSHGWGKCAIQELFDAPLNEIMNNNQKKIASNIKREARNADYLMIWTDCDREGEYIGWEIWQEAKRGNRLIQNDQVYRAVFSHLERQHILNAARNPSRLDMKSVHAVGTRIEIDLRAGVTFTRLLTETLRNKLRNQATMTKDGAKHRGGNKNDSQVVSYGTCQFPTLGFVVDRFERIRNFVPEEFWYIQLVVENKDNGGTTTFQWDRGHLFDRLSVLTFYETCIETAGNVAQVVDLKSKPTTKYRPLPLTTVELQKNCARYLRLNAKQSLDAAEKLYQKGFISYPRTETDTFPHAMDLKSLVEKQAQLDQLAAGGRTAWASYAASLLQPENTSNNNKFKFPRSGSHDDKAHPPIHPIVSLGPEANVSPVERRVYEYVARHFLACCSEDAKGQSMTLVLDWAVERFSASGLVVLERNFLDVYPWARWETTKQLPRLEMNALVDIAKAEMKAGTTAPPKPMTESELILLMDTNGIGTDATIAEHIDKIQVRNYVRSEKVGKETYLQPTTLGVSLVHGFEAIGLEDSFAKPFQRREMEQDLKKICEGHASKTDVVKDIVEKYRKYWHKTNACKNTLLQVYDRVKASM.

The Toprim domain maps to 2 to 156; sequence KVLCVAEKNS…QVYRAVFSHL (155 aa). Residues 172-635 form the Topo IA-type catalytic domain; sequence DMKSVHAVGT…DIVEKYRKYW (464 aa). Catalysis depends on tyrosine 356, which acts as the O-(5'-phospho-DNA)-tyrosine intermediate.

Belongs to the type IA topoisomerase family. As to quaternary structure, forms a complex with SGS1 and RMI1. Interacts with SGS1.

The enzyme catalyses ATP-independent breakage of single-stranded DNA, followed by passage and rejoining.. Functionally, releases the supercoiling and torsional tension of DNA introduced during the DNA replication and transcription by transiently cleaving and rejoining one strand of the DNA duplex. Introduces a single-strand break via transesterification at a target site in duplex DNA. The scissile phosphodiester is attacked by the catalytic tyrosine of the enzyme, resulting in the formation of a DNA-(5'-phosphotyrosyl)-enzyme intermediate and the expulsion of a 3'-OH DNA strand. The free DNA strand than undergoes passage around the unbroken strand thus removing DNA supercoils. Finally, in the religation step, the DNA 3'-OH attacks the covalent intermediate to expel the active-site tyrosine and restore the DNA phosphodiester backbone. Essential for proper chromosome segregation in both meiosis and mitosis. Weakly relaxes negative supercoils and displays a distinct preference for binding single-stranded DNA. The TOP3-SGS1 protein complex may function as a eukaryotic reverse gyrase introducing positive supercoils into extrachromosomal ribosomal DNA rings. This chain is DNA topoisomerase 3 (TOP3), found in Saccharomyces cerevisiae (strain ATCC 204508 / S288c) (Baker's yeast).